The primary structure comprises 338 residues: Nicotinate-nucleotide--dimethylbenzimidazole phosphoribosyltransferase (338 aa).

Glu-305 acts as the Proton acceptor in catalysis.

The protein belongs to the CobT family.

It carries out the reaction 5,6-dimethylbenzimidazole + nicotinate beta-D-ribonucleotide = alpha-ribazole 5'-phosphate + nicotinate + H(+). Its pathway is nucleoside biosynthesis; alpha-ribazole biosynthesis; alpha-ribazole from 5,6-dimethylbenzimidazole: step 1/2. Functionally, catalyzes the synthesis of alpha-ribazole-5'-phosphate from nicotinate mononucleotide (NAMN) and 5,6-dimethylbenzimidazole (DMB). The sequence is that of Nicotinate-nucleotide--dimethylbenzimidazole phosphoribosyltransferase from Novosphingobium aromaticivorans (strain ATCC 700278 / DSM 12444 / CCUG 56034 / CIP 105152 / NBRC 16084 / F199).